Here is an 872-residue protein sequence, read N- to C-terminus: MSGRDNRGAGGGGGGGGGGSGGGHHHHQPLSSAMGKLKEKLTRVGDDLGYHRVESNLSTSNTATSLDTILPEDPFLFPQEAPQRHPQQSPSQSQQQQRRFLDDEPPLSFRPLLEDDDINEPPTQQQPQQQHQQQHRSPLSASGSLELTPLPPPPTTLEPRDRQQRSIPGEDLQRSKQSLKGSRVSFEKTNSKQAAESSDEDSFEDKRIGFQQQKATSVDHKGILKDLKHILANDNRRQFQAKKHVSLDVKGTRFLQDLLKESSSEEEFHKTRREFQGRKHQSLDPRVTFKLDKVLQGSSTDSDEEGDDAEHKRLIHRPKDITKPVIIDLKDLESESDEDFLTSRQHFQQQRSISTDSRKSRRLYEMDDMGNKRGDNIRHAVPFVRQITEDGKPKLEVYRPTTNPIYIWTQVLAALSVSLGSLVVGFVSAYTSPALITMTNGNITSFEVTPQAASWVGGIMPLAGLLGGIAGGPFIEYLGRRNTILTTAVPFIVSSLLIACAVNITMVLLGRFLAGFCVGIASLSLPVYLGETVQPEVRGTLGLLPTAFGNIGILLCFVAGTYMDWSMLAFLGAALPVPFLILMFLIPETPRWYVSRGREERARKALSWLRGKEADVEPELKGLLRSQADADRSATQNTMLELLKRNNLKPLSISLGLMFFQQLSGINAVIFYTVQIFKDAGSTIDGNVCTIIVGIVNFMATFIGIILIDRAGRKILLYVSNVAMIITLFVLGGFFYCKDKAGIDVSNVGWLPLSCFVVYILGFSLGFGPIPWLMMGEILPAKIRGSAASVATAFNWTCTFVVTKTFQDMLDVIGSYGAFWLFGAICFIGLFFVIIYVPETQGKTLEDIERKMMGRVRRMSSVANIKPLSFNM.

Disordered stretches follow at residues 1 to 40, 53 to 217, 262 to 281, and 293 to 315; these read MSGR…LKEK, VESN…KATS, SSSE…RKHQ, and KVLQ…KRLI. Residues 1-406 are Cytoplasmic-facing; that stretch reads MSGRDNRGAG…VYRPTTNPIY (406 aa). The segment covering 8–22 has biased composition (gly residues); sequence GAGGGGGGGGGGSGG. 3 stretches are compositionally biased toward low complexity: residues 55-68, 84-98, and 121-132; these read SNLS…SLDT, RHPQ…QQQR, and PPTQQQPQQQHQ. Serine 262, serine 263, and serine 264 each carry phosphoserine. Serine 334 and serine 336 each carry phosphoserine. Residues 340–361 form a disordered region; the sequence is FLTSRQHFQQQRSISTDSRKSR. Residues 344-355 are compositionally biased toward polar residues; the sequence is RQHFQQQRSIST. Residues 407 to 427 form a helical membrane-spanning segment; that stretch reads IWTQVLAALSVSLGSLVVGFV. At 428–454 the chain is on the extracellular side; the sequence is SAYTSPALITMTNGNITSFEVTPQAAS. Asparagine 442 is a glycosylation site (N-linked (GlcNAc...) asparagine). A helical transmembrane segment spans residues 455–475; sequence WVGGIMPLAGLLGGIAGGPFI. The Cytoplasmic segment spans residues 476–488; the sequence is EYLGRRNTILTTA. A helical transmembrane segment spans residues 489–509; the sequence is VPFIVSSLLIACAVNITMVLL. Residues 510 to 511 are Extracellular-facing; sequence GR. Residues 512–532 traverse the membrane as a helical segment; the sequence is FLAGFCVGIASLSLPVYLGET. The Cytoplasmic portion of the chain corresponds to 533 to 538; the sequence is VQPEVR. A helical membrane pass occupies residues 539–559; that stretch reads GTLGLLPTAFGNIGILLCFVA. Residues 560 to 566 lie on the Extracellular side of the membrane; the sequence is GTYMDWS. Residues 567–587 form a helical membrane-spanning segment; sequence MLAFLGAALPVPFLILMFLIP. Topologically, residues 588 to 650 are cytoplasmic; it reads ETPRWYVSRG…ELLKRNNLKP (63 aa). The helical transmembrane segment at 651 to 671 threads the bilayer; it reads LSISLGLMFFQQLSGINAVIF. Topologically, residues 672–687 are extracellular; it reads YTVQIFKDAGSTIDGN. The helical transmembrane segment at 688-708 threads the bilayer; the sequence is VCTIIVGIVNFMATFIGIILI. The Cytoplasmic portion of the chain corresponds to 709 to 714; the sequence is DRAGRK. A helical membrane pass occupies residues 715–735; it reads ILLYVSNVAMIITLFVLGGFF. At 736 to 755 the chain is on the extracellular side; that stretch reads YCKDKAGIDVSNVGWLPLSC. The helical transmembrane segment at 756 to 776 threads the bilayer; the sequence is FVVYILGFSLGFGPIPWLMMG. At 777–784 the chain is on the cytoplasmic side; the sequence is EILPAKIR. A helical membrane pass occupies residues 785 to 803; that stretch reads GSAASVATAFNWTCTFVVT. Topologically, residues 804 to 816 are extracellular; it reads KTFQDMLDVIGSY. Residues 817-837 form a helical membrane-spanning segment; the sequence is GAFWLFGAICFIGLFFVIIYV. The Cytoplasmic segment spans residues 838–872; the sequence is PETQGKTLEDIERKMMGRVRRMSSVANIKPLSFNM. Residues serine 860 and serine 861 each carry the phosphoserine modification.

This sequence belongs to the major facilitator superfamily. Sugar transporter (TC 2.A.1.1) family. Trehalose transporter subfamily.

Its subcellular location is the cell membrane. Its function is as follows. Low-capacity facilitative transporter for trehalose. Does not transport maltose, sucrose or lactose. Mediates the bidirectional transfer of trehalose. Responsible for the transport of trehalose synthesized in the fat body and the incorporation of trehalose into other tissues that require a carbon source, thereby regulating trehalose levels in the hemolymph. In Drosophila willistoni (Fruit fly), this protein is Facilitated trehalose transporter Tret1.